The following is a 987-amino-acid chain: Voltage-gated delayed rectifier potassium channel KCNH1 (987 aa).

Over 1-220 (MTMAGGRKGL…LHYCVFKTTW (220 aa)) the chain is Cytoplasmic. Residues 14-94 (QNTFLENIVR…QTFENYEMNS (81 aa)) enclose the PAS domain. The PAC domain occupies 93 to 145 (NSFEILMYKKNRTPVWFFVKIAPIRNEQDKVVLFLCTFSDITAFKQPIEDDSC). The tract at residues 151–162 (FARLTRALTSSR) is required for phosphatidylinositol bisphosphate binding. The chain crosses the membrane as a helical span at residues 221–241 (DWIILILTFYTAILVPYNVSF). At 242–248 (KTRQNNV) the chain is on the extracellular side. Residues 249-269 (AWLVVDSIVDVIFLVDIVLNF) form a helical membrane-spanning segment. The Cytoplasmic segment spans residues 270-290 (HTTFVGPAGEVISDPKLIRMN). Residues 291–309 (YLKTWFVIDLLSCLPYDVI) form a helical membrane-spanning segment. Residues 310–345 (NAFENVDEVSAFMGDPGKIGFADQIPPPLEGRESQG) lie on the Extracellular side of the membrane. The helical; Voltage-sensor transmembrane segment at 346-368 (ISSLFSSLKVVRLLRLGRVARKL) threads the bilayer. Residues 369 to 377 (DHYIEYGAA) lie on the Cytoplasmic side of the membrane. The helical transmembrane segment at 378 to 399 (VLVLLVCVFGLAAHWMACIWYS) threads the bilayer. Topologically, residues 400–448 (IGDYEIFDEDTKTIRNNSWLYQLAMDIGTPYQFNGSGSGKWEGGPSKNS) are extracellular. Residues asparagine 415 and asparagine 433 are each glycosylated (N-linked (GlcNAc...) asparagine). Positions 449–470 (VYISSLYFTMTSLTSVGFGNIA) form an intramembrane region, pore-forming. A Selectivity filter motif is present at residues 463–468 (SVGFGN). The Extracellular portion of the chain corresponds to 471–477 (PSTDIEK). A helical membrane pass occupies residues 478 to 498 (IFAVAIMMIGSLLYATIFGNV). At 499–987 (TTIFQQMYAN…ESERDIFGAS (489 aa)) the chain is on the cytoplasmic side. A calmodulin-binding region spans residues 673-770 (KRDALQKVLE…LDDLDVEKGS (98 aa)). The interaction with cyclic nucleotide-binding pocket stretch occupies residues 699–701 (YNL). The tract at residues 922–962 (AAVLEVKHELKEDIKALSTKMTSIEKQLSEILRILTSRRSS) is CAD (involved in subunit assembly). A disordered region spans residues 960-987 (RSSQSPQELFEISRPQSPESERDIFGAS). Phosphoserine occurs at positions 972, 976, and 979. The segment covering 978-987 (ESERDIFGAS) has biased composition (basic and acidic residues).

This sequence belongs to the potassium channel family. H (Eag) (TC 1.A.1.20) subfamily. Kv10.1/KCNH1 sub-subfamily. As to quaternary structure, homomultimer. The potassium channel is composed of a homo- or heterotetrameric complex of pore-forming alpha subunits that can associate with modulating beta subunits. Heteromultimer with KCNH5/EAG2. Interacts with ALG10B. Interacts with RABEP1. Interacts (via C-terminus) with CTTN. Interacts (via C-terminal cytoplasmic region) with Ca(2+)-bound calmodulin. Channel activity is regulated via tyrosine phosphorylation/dephosphorylation by SRC and PTPN6. Detected in cerebellum, cortex and retina.

The protein resides in the cell membrane. Its subcellular location is the nucleus inner membrane. It is found in the cell projection. The protein localises to the dendrite. It localises to the axon. The protein resides in the presynaptic cell membrane. Its subcellular location is the perikaryon. It is found in the postsynaptic density membrane. The protein localises to the early endosome membrane. The enzyme catalyses K(+)(in) = K(+)(out). Channel activity is inhibited by interaction with Ca(2+)-bound calmodulin. Interaction of a single pore-forming alpha subunit with a calmodulin chain is sufficient to promote channel closure. Extracellular magnesium ion concentrations up to 4 mM modulate channel activity by slowing down current activation in a reversible fashion. Channel activity is not regulated by cyclic nucleotides. Channel activity is inhibited by binding intracellular phosphatidylinositol-3,5-bisphosphate and phosphatidylinositol-4,5-bisphosphate (PIP2), but is not inhibited by phosphatidylinositol 4-phosphate. Functionally, pore-forming (alpha) subunit of a voltage-gated delayed rectifier potassium channel that mediates outward-rectifying potassium currents which, on depolarization, reaches a steady-state level and do not inactivate. The activation kinetics depend on the prepulse potential and external divalent cation concentration. With negative prepulses, the current activation is delayed and slowed down several fold, whereas more positive prepulses speed up activation. The time course of activation is biphasic with a fast and a slowly activating current component. Activates at more positive membrane potentials and exhibit a steeper activation curve. Channel properties are modulated by subunit assembly. Mediates IK(NI) current in myoblasts. Involved in the regulation of cell proliferation and differentiation, in particular adipogenic and osteogenic differentiation in bone marrow-derived mesenchymal stem cells (MSCs). The protein is Voltage-gated delayed rectifier potassium channel KCNH1 of Bos taurus (Bovine).